The following is a 356-amino-acid chain: Peptide-N(4)-(N-acetyl-beta-glucosaminyl)asparagine amidase (356 aa).

Positions 129, 132, 163, and 166 each coordinate Zn(2+). The active-site Nucleophile is the Cys-189. Catalysis depends on residues His-216 and Asp-233. Glu-236 contacts substrate. A disordered region spans residues 300-356 (IRQNLSPSEKEELKREDEAEERELASYNADEPQEAQMPRQSGSVEWTKARGEGGSDD). Composition is skewed to basic and acidic residues over residues 307-316 (SEKEELKRED) and 346-356 (TKARGEGGSDD).

It belongs to the transglutaminase-like superfamily. PNGase family. It depends on Zn(2+) as a cofactor.

It localises to the cytoplasm. It carries out the reaction Hydrolysis of an N(4)-(acetyl-beta-D-glucosaminyl)asparagine residue in which the glucosamine residue may be further glycosylated, to yield a (substituted) N-acetyl-beta-D-glucosaminylamine and a peptide containing an aspartate residue.. Functionally, specifically deglycosylates the denatured form of N-linked glycoproteins in the cytoplasm and assists their proteasome-mediated degradation. Cleaves the beta-aspartyl-glucosamine (GlcNAc) of the glycan and the amide side chain of Asn, converting Asn to Asp. Prefers proteins containing high-mannose over those bearing complex type oligosaccharides. Can recognize misfolded proteins in the endoplasmic reticulum that are exported to the cytosol to be destroyed and deglycosylate them, while it has no activity toward native proteins. Deglycosylation is a prerequisite for subsequent proteasome-mediated degradation of some, but not all, misfolded glycoproteins. The polypeptide is Peptide-N(4)-(N-acetyl-beta-glucosaminyl)asparagine amidase (PNG1) (Yarrowia lipolytica (strain CLIB 122 / E 150) (Yeast)).